The chain runs to 188 residues: ATP synthase subunit b 1 (188 aa).

A helical transmembrane segment spans residues 7–27 (LSVLALAMLAANPAFAAGGGI).

It belongs to the ATPase B chain family. F-type ATPases have 2 components, F(1) - the catalytic core - and F(0) - the membrane proton channel. F(1) has five subunits: alpha(3), beta(3), gamma(1), delta(1), epsilon(1). F(0) has three main subunits: a(1), b(2) and c(10-14). The alpha and beta chains form an alternating ring which encloses part of the gamma chain. F(1) is attached to F(0) by a central stalk formed by the gamma and epsilon chains, while a peripheral stalk is formed by the delta and b chains.

Its subcellular location is the cell inner membrane. F(1)F(0) ATP synthase produces ATP from ADP in the presence of a proton or sodium gradient. F-type ATPases consist of two structural domains, F(1) containing the extramembraneous catalytic core and F(0) containing the membrane proton channel, linked together by a central stalk and a peripheral stalk. During catalysis, ATP synthesis in the catalytic domain of F(1) is coupled via a rotary mechanism of the central stalk subunits to proton translocation. Functionally, component of the F(0) channel, it forms part of the peripheral stalk, linking F(1) to F(0). This chain is ATP synthase subunit b 1, found in Roseobacter denitrificans (strain ATCC 33942 / OCh 114) (Erythrobacter sp. (strain OCh 114)).